Here is a 277-residue protein sequence, read N- to C-terminus: NADPH-dependent 7-cyano-7-deazaguanine reductase (277 aa).

Residue 86 to 88 (IES) participates in substrate binding. Position 88 to 89 (88 to 89 (SK)) interacts with NADPH. Cys185 (thioimide intermediate) is an active-site residue. Asp192 functions as the Proton donor in the catalytic mechanism. Residue 224 to 225 (HE) coordinates substrate. Residue 253 to 254 (RG) coordinates NADPH.

Belongs to the GTP cyclohydrolase I family. QueF type 2 subfamily. Homodimer.

It localises to the cytoplasm. The catalysed reaction is 7-aminomethyl-7-carbaguanine + 2 NADP(+) = 7-cyano-7-deazaguanine + 2 NADPH + 3 H(+). The protein operates within tRNA modification; tRNA-queuosine biosynthesis. Its function is as follows. Catalyzes the NADPH-dependent reduction of 7-cyano-7-deazaguanine (preQ0) to 7-aminomethyl-7-deazaguanine (preQ1). This chain is NADPH-dependent 7-cyano-7-deazaguanine reductase, found in Hydrogenovibrio crunogenus (strain DSM 25203 / XCL-2) (Thiomicrospira crunogena).